A 321-amino-acid chain; its full sequence is Lipoyl synthase (321 aa).

7 residues coordinate [4Fe-4S] cluster: C68, C73, C79, C94, C98, C101, and S308. Positions 80–297 (FNHGTATFMI…KEIALELGFT (218 aa)) constitute a Radical SAM core domain.

The protein belongs to the radical SAM superfamily. Lipoyl synthase family. [4Fe-4S] cluster serves as cofactor.

Its subcellular location is the cytoplasm. The enzyme catalyses [[Fe-S] cluster scaffold protein carrying a second [4Fe-4S](2+) cluster] + N(6)-octanoyl-L-lysyl-[protein] + 2 oxidized [2Fe-2S]-[ferredoxin] + 2 S-adenosyl-L-methionine + 4 H(+) = [[Fe-S] cluster scaffold protein] + N(6)-[(R)-dihydrolipoyl]-L-lysyl-[protein] + 4 Fe(3+) + 2 hydrogen sulfide + 2 5'-deoxyadenosine + 2 L-methionine + 2 reduced [2Fe-2S]-[ferredoxin]. It functions in the pathway protein modification; protein lipoylation via endogenous pathway; protein N(6)-(lipoyl)lysine from octanoyl-[acyl-carrier-protein]: step 2/2. Its function is as follows. Catalyzes the radical-mediated insertion of two sulfur atoms into the C-6 and C-8 positions of the octanoyl moiety bound to the lipoyl domains of lipoate-dependent enzymes, thereby converting the octanoylated domains into lipoylated derivatives. This is Lipoyl synthase from Aliivibrio fischeri (strain MJ11) (Vibrio fischeri).